The sequence spans 639 residues: Extracellular metalloproteinase 1 (639 aa).

A signal peptide spans 1-19 (MHGLLLAAGLISLPLHVLA). The propeptide occupies 20–250 (HPQPSSTSLA…VHNVVDYVAH (231 aa)). The N-linked (GlcNAc...) asparagine glycan is linked to Asn-291. Residue His-434 coordinates Zn(2+). The active site involves Glu-435. His-438 provides a ligand contact to Zn(2+). The N-linked (GlcNAc...) asparagine glycan is linked to Asn-598.

The protein belongs to the peptidase M36 family. Zn(2+) serves as cofactor.

Its subcellular location is the secreted. Functionally, secreted metalloproteinase probably acting as a virulence factor. This chain is Extracellular metalloproteinase 1 (MEP1), found in Arthroderma otae (strain ATCC MYA-4605 / CBS 113480) (Microsporum canis).